Consider the following 353-residue polypeptide: Nuclear hormone receptor family member nhr-27 (353 aa).

Residues 24–102 (VSNCVVCGRL…KGMLDLSRYT (79 aa)) constitute a DNA-binding region (nuclear receptor). NR C4-type zinc fingers lie at residues 27-47 (CVVC…CSAC) and 64-85 (CKYS…CKFC). Residues 119–351 (ETLFLTMTVS…SQVHQDVIEF (233 aa)) enclose the NR LBD domain. The interval 340–351 (QPSQVHQDVIEF) is AF-2.

This sequence belongs to the nuclear hormone receptor family.

It is found in the nucleus. Its function is as follows. Ligand-activated transcription factor. Involved in lifespan extension in a manner dependent upon mitochondrial function. This chain is Nuclear hormone receptor family member nhr-27, found in Caenorhabditis elegans.